The sequence spans 451 residues: Kynureninase (451 aa).

Pyridoxal 5'-phosphate contacts are provided by residues Leu-131, Ser-132, Phe-159 to Asp-162, Ser-215, Asp-244, His-247, and Tyr-269. Lys-270 bears the N6-(pyridoxal phosphate)lysine mark. Pyridoxal 5'-phosphate is bound by residues Trp-303 and Asn-331.

The protein belongs to the kynureninase family. In terms of assembly, homodimer. It depends on pyridoxal 5'-phosphate as a cofactor.

It is found in the cytoplasm. The catalysed reaction is L-kynurenine + H2O = anthranilate + L-alanine + H(+). It catalyses the reaction 3-hydroxy-L-kynurenine + H2O = 3-hydroxyanthranilate + L-alanine + H(+). Its pathway is amino-acid degradation; L-kynurenine degradation; L-alanine and anthranilate from L-kynurenine: step 1/1. The protein operates within cofactor biosynthesis; NAD(+) biosynthesis; quinolinate from L-kynurenine: step 2/3. Catalyzes the cleavage of L-kynurenine (L-Kyn) and L-3-hydroxykynurenine (L-3OHKyn) into anthranilic acid (AA) and 3-hydroxyanthranilic acid (3-OHAA), respectively. The polypeptide is Kynureninase (Dictyostelium discoideum (Social amoeba)).